The sequence spans 201 residues: dITP/XTP pyrophosphatase (201 aa).

7–12 (TNNKGK) serves as a coordination point for substrate. Residues glutamate 40 and aspartate 69 each contribute to the Mg(2+) site. Aspartate 69 functions as the Proton acceptor in the catalytic mechanism. Substrate-binding positions include serine 70, 152–155 (FGYD), lysine 175, and 180–181 (HR).

This sequence belongs to the HAM1 NTPase family. As to quaternary structure, homodimer. The cofactor is Mg(2+).

The catalysed reaction is XTP + H2O = XMP + diphosphate + H(+). The enzyme catalyses dITP + H2O = dIMP + diphosphate + H(+). It carries out the reaction ITP + H2O = IMP + diphosphate + H(+). Its function is as follows. Pyrophosphatase that catalyzes the hydrolysis of nucleoside triphosphates to their monophosphate derivatives, with a high preference for the non-canonical purine nucleotides XTP (xanthosine triphosphate), dITP (deoxyinosine triphosphate) and ITP. Seems to function as a house-cleaning enzyme that removes non-canonical purine nucleotides from the nucleotide pool, thus preventing their incorporation into DNA/RNA and avoiding chromosomal lesions. The polypeptide is dITP/XTP pyrophosphatase (Desulforamulus reducens (strain ATCC BAA-1160 / DSM 100696 / MI-1) (Desulfotomaculum reducens)).